Consider the following 189-residue polypeptide: Elongation factor P (189 aa).

It belongs to the elongation factor P family.

The protein localises to the cytoplasm. The protein operates within protein biosynthesis; polypeptide chain elongation. Involved in peptide bond synthesis. Stimulates efficient translation and peptide-bond synthesis on native or reconstituted 70S ribosomes in vitro. Probably functions indirectly by altering the affinity of the ribosome for aminoacyl-tRNA, thus increasing their reactivity as acceptors for peptidyl transferase. The polypeptide is Elongation factor P (Rhizobium rhizogenes (strain K84 / ATCC BAA-868) (Agrobacterium radiobacter)).